A 252-amino-acid chain; its full sequence is Neurotrophic factor BDNF precursor form (252 aa).

A signal peptide spans 1–18; that stretch reads MTILFLTMVISYFGCMKA. A propeptide spanning residues 19–133 is cleaved from the precursor; it reads APMKEANVRG…AANMSMRVRR (115 aa). The interval 43-62 is disordered; sequence LESVNGPKAGSRGLTSSSSS. A glycan (N-linked (GlcNAc...) asparagine) is linked at asparagine 126. 3 cysteine pairs are disulfide-bonded: cysteine 146-cysteine 213, cysteine 191-cysteine 242, and cysteine 201-cysteine 244.

This sequence belongs to the NGF-beta family. As to quaternary structure, monomers and homodimers. Binds to NTRK2/TRKB. Can form heterodimers with other neurotrophin family members, such as NTF3 and NTF4 (in vitro), but the physiological relevance of this is not clear. BDNF precursor form: interacts with the heterodimer formed by NGFR and SORCS2. Mature BDNF has much lower affinity for the heterodimer formed by NGFR and SORCS2. In terms of processing, N-glycosylated and glycosulfated, contrary to mature BDNF. Post-translationally, mature BDNF is produced by proteolytic removal of the propeptide, catalyzed by a FURIN family member. In addition, the precursor form is proteolytically cleaved within the propeptide, but this is not an obligatory intermediate for the production of mature BDNF. Can be converted into mature BDNF by plasmin (PLG). As to expression, brain and central nervous system.

It is found in the secreted. Its function is as follows. Important signaling molecule that activates signaling cascades downstream of NTRK2. During development, promotes the survival and differentiation of selected neuronal populations of the peripheral and central nervous systems. Participates in axonal growth, pathfinding and in the modulation of dendritic growth and morphology. Major regulator of synaptic transmission and plasticity at adult synapses in many regions of the CNS. The versatility of BDNF is emphasized by its contribution to a range of adaptive neuronal responses including long-term potentiation (LTP), long-term depression (LTD), certain forms of short-term synaptic plasticity, as well as homeostatic regulation of intrinsic neuronal excitability. In terms of biological role, important signaling molecule that activates signaling cascades downstream of NTRK2. Activates signaling cascades via the heterodimeric receptor formed by NGFR and SORCS2. Signaling via NGFR and SORCS2 plays a role in synaptic plasticity and long-term depression (LTD). Binding to NGFR and SORCS2 promotes neuronal apoptosis. Promotes neuronal growth cone collapse. The polypeptide is Neurotrophic factor BDNF precursor form (BDNF) (Sus scrofa (Pig)).